A 726-amino-acid chain; its full sequence is Phenylalanine--tRNA ligase beta subunit (726 aa).

Positions 38–150 (FSSSKGLLFA…NFASLNDDAS (113 aa)) constitute a tRNA-binding domain. The B5 domain maps to 394-467 (DKKVEINFDE…RFYNYDNFKE (74 aa)). The Mg(2+) site is built by Asp-445, Asp-451, Glu-454, and Glu-455.

It belongs to the phenylalanyl-tRNA synthetase beta subunit family. Type 1 subfamily. In terms of assembly, tetramer of two alpha and two beta subunits. Requires Mg(2+) as cofactor.

The protein resides in the cytoplasm. The catalysed reaction is tRNA(Phe) + L-phenylalanine + ATP = L-phenylalanyl-tRNA(Phe) + AMP + diphosphate + H(+). The sequence is that of Phenylalanine--tRNA ligase beta subunit from Mycoplasmopsis synoviae (strain 53) (Mycoplasma synoviae).